A 467-amino-acid chain; its full sequence is Syntaxin-5 (467 aa).

Disordered regions lie at residues 1–53 (MQTR…QSLV) and 58–77 (GHEA…SIST). Residues 1–445 (MQTRRRLHQT…KYFQSVSKNR (445 aa)) are Cytoplasmic-facing. Positions 10 to 22 (TDQQDYSSSSTYT) are enriched in low complexity. The span at 29–45 (GGAGAGSVGTGTAGGSV) shows a compositional bias: gly residues. Over residues 68–77 (NYQSGDSIST) the composition is skewed to polar residues. Positions 245–269 (IKGDLNALNQQIARLQDISKDQRRH) form a coiled coil. Residues 310 to 335 (QQKTRRDQFSQGPGPLAAHTVSPSTA) form a disordered region. The t-SNARE coiled-coil homology domain occupies 375 to 437 (DNYVQQRAET…EAAHGEILKY (63 aa)). Residues 446–466 (WLMIKIFGVLIFFFLFFVVFM) form a helical; Anchor for type IV membrane protein membrane-spanning segment. Residue Ser-467 is a topological domain, vesicular.

It belongs to the syntaxin family. In terms of assembly, homodimer.

Its subcellular location is the golgi apparatus. The protein resides in the cis-Golgi network membrane. In terms of biological role, mediates endoplasmic reticulum to Golgi transport. This chain is Syntaxin-5, found in Drosophila melanogaster (Fruit fly).